The sequence spans 712 residues: Solute carrier organic anion transporter family member 1C1 (712 aa).

At 1-43 (MDTSSKENIQLFCKTSVQPVGRPSFKTEYPSSEEKQPCCGELK) the chain is on the cytoplasmic side. The helical transmembrane segment at 44–63 (VFLCALSFVYFAKALAEGYL) threads the bilayer. Over 64–82 (KSTITQIERRFDIPSSLVG) the chain is Extracellular. A helical membrane pass occupies residues 83-103 (VIDGSFEIGNLLVITFVSYFG). Residues 104-109 (AKLHRP) are Cytoplasmic-facing. A helical membrane pass occupies residues 110 to 134 (KIIGAGCVIMGVGTLLIAMPQFFME). Over 135 to 184 (QYKYERYSPSSNSTLSISPCLLESSSQLPVSVMEKSKSKISNECEVDTSS) the chain is Extracellular. N-linked (GlcNAc...) asparagine glycosylation occurs at asparagine 146. A helical transmembrane segment spans residues 185–213 (SMWIYVFLGNLLRGIGETPIQPLGIAYLD). The Cytoplasmic portion of the chain corresponds to 214-232 (DFASEDNAAFYIGCVQTVA). Residues 233-253 (IIGPIFGFLLGSLCAKLYVDI) form a helical membrane-spanning segment. The Extracellular segment spans residues 254–271 (GFVNLDHITITPKDPQWV). The helical transmembrane segment at 272–296 (GAWWLGYLIAGIISLLAAVPFWYLP) threads the bilayer. Topologically, residues 297 to 348 (KSLPRSQSREDSNSSSEKSKFIIDDHTDYQTPQGENAKIMEMARDFLPSLKN) are cytoplasmic. A helical transmembrane segment spans residues 349 to 370 (LFGNPVYFLYLCTSTVQFNSLF). Residues 371–390 (GMVTYKPKYIEQQYGQSSSR) lie on the Extracellular side of the membrane. A helical transmembrane segment spans residues 391–414 (ANFVIGLINIPAVALGIFSGGIVM). The Cytoplasmic portion of the chain corresponds to 415 to 418 (KKFR). A helical membrane pass occupies residues 419–442 (ISVCGAAKLYLGSSVFGYLLFLSL). The Extracellular portion of the chain corresponds to 443–554 (FALGCENSDV…NGCPQMFLYF (112 aa)). In terms of domain architecture, Kazal-like spans 470–525 (RALFSDCNSRCKCSETKWEPMCGENGITYVSACLAGCQTSNRSGKNIIFYNCTCVG). 3 disulfide bridges follow: cysteine 476/cysteine 506, cysteine 482/cysteine 502, and cysteine 491/cysteine 523. N-linked (GlcNAc...) asparagine glycosylation is found at asparagine 510, asparagine 520, and asparagine 533. The helical transmembrane segment at 555–577 (LVISVITSYTLSLGGIPGYILLL) threads the bilayer. Residues 578–586 (RCIKPQLKS) lie on the Cytoplasmic side of the membrane. Residues 587–612 (FALGIYTLAIRVLAGIPAPVYFGVLI) form a helical membrane-spanning segment. Topologically, residues 613–646 (DTSCLKWGFKRCGSRGSCRLYDSNVFRHIYLGLT) are extracellular. A helical membrane pass occupies residues 647-664 (VILGTVSILLSIAVLFIL). At 665–712 (KKNYVSKHRSFITKRERTMVSTRFQKENYTTSDHLLQPNYWPGKETQL) the chain is on the cytoplasmic side.

The protein belongs to the organo anion transporter (TC 2.A.60) family. In terms of tissue distribution, highly expressed in brain and in Leydig cells in testis. Localized in nests of Leydig cells (at protein level). Expressed in choroid plexus (at protein level). Not strongly enriched in cerebral microvessels.

It localises to the cell membrane. The enzyme catalyses 3,3',5'-triiodo-L-thyronine(out) = 3,3',5'-triiodo-L-thyronine(in). It carries out the reaction L-thyroxine(out) = L-thyroxine(in). It catalyses the reaction L-thyroxine sulfate(out) = L-thyroxine sulfate(in). Its function is as follows. Mediates the Na(+)-independent high affinity transport of organic anions such as the thyroid hormones L-thyroxine (T4), L-thyroxine sulfate (T4S), and 3,3',5'-triiodo-L-thyronine (reverse T3, rT3) at the plasma membrane. Regulates T4 levels in different brain regions by transporting T4, and also by serving as an export pump for T4S, which is a source of T4 after hydrolysis by local sulfatases. Increases the access of these substrates to the intracellular sites where they are metabolized by the deiodinases. Other potential substrates, such as triiodothyronine (T3), 17-beta-glucuronosyl estradiol (17beta-estradiol 17-O-(beta-D-glucuronate)), estrone-3-sulfate (E1S) and sulfobromophthalein (BSP) are transported with much lower efficiency. Transports T4 and E1S in a pH-insensitive manner. Facilitates the transport of thyroid hormones across the blood-brain barrier and into glia and neuronal cells in the brain. The polypeptide is Solute carrier organic anion transporter family member 1C1 (SLCO1C1) (Homo sapiens (Human)).